The sequence spans 384 residues: Cytochrome b (384 aa).

Transmembrane regions (helical) follow at residues Leu32–Met52, Trp76–Gly98, Val113–Cys133, and Phe179–Met199. Heme b-binding residues include His82 and His96. Heme b is bound by residues His183 and His197. His202 serves as a coordination point for a ubiquinone. Transmembrane regions (helical) follow at residues Phe225–Phe245, Leu289–Asp309, Leu321–Glu341, and Phe348–Pro368.

Belongs to the cytochrome b family. Fungal cytochrome b-c1 complex contains 10 subunits; 3 respiratory subunits, 2 core proteins and 5 low-molecular weight proteins. Cytochrome b-c1 complex is a homodimer. Requires heme b as cofactor.

The protein localises to the mitochondrion inner membrane. Component of the ubiquinol-cytochrome c reductase complex (complex III or cytochrome b-c1 complex) that is part of the mitochondrial respiratory chain. The b-c1 complex mediates electron transfer from ubiquinol to cytochrome c. Contributes to the generation of a proton gradient across the mitochondrial membrane that is then used for ATP synthesis. The protein is Cytochrome b (COB) of Eremothecium gossypii (strain ATCC 10895 / CBS 109.51 / FGSC 9923 / NRRL Y-1056) (Yeast).